We begin with the raw amino-acid sequence, 89 residues long: Large ribosomal subunit protein bL27 (89 aa).

Belongs to the bacterial ribosomal protein bL27 family.

The sequence is that of Large ribosomal subunit protein bL27 from Ruegeria sp. (strain TM1040) (Silicibacter sp.).